The sequence spans 170 residues: Putative zinc finger protein 542 (170 aa).

One can recognise a KRAB domain in the interval 1–42 (MLENYQNLVWLGLSISKSVISLLEKRKLPWIMAKEEIRGPLP). 2 C2H2-type zinc fingers span residues 98–120 (NVCK…KRNH) and 126–148 (NQCL…QRIH). The C2H2-type 3; degenerate zinc finger occupies 154 to 170 (YKCNECIKTFNQRAHLT).

Belongs to the krueppel C2H2-type zinc-finger protein family.

It localises to the nucleus. Functionally, may be involved in transcriptional regulation. In Homo sapiens (Human), this protein is Putative zinc finger protein 542 (ZNF542P).